A 302-amino-acid chain; its full sequence is Catechol 1,2-dioxygenase (302 aa).

Fe cation is bound by residues Tyr164, Tyr198, His222, and His224.

It belongs to the intradiol ring-cleavage dioxygenase family. Fe(3+) serves as cofactor.

The enzyme catalyses catechol + O2 = cis,cis-muconate + 2 H(+). It participates in aromatic compound metabolism; beta-ketoadipate pathway; 5-oxo-4,5-dihydro-2-furylacetate from catechol: step 1/3. The chain is Catechol 1,2-dioxygenase (pheB) from Pseudomonas sp. (strain EST1001).